The following is a 414-amino-acid chain: Methyltransferase-like protein 2 (414 aa).

Residues leucine 56–phenylalanine 77 form a disordered region.

The protein belongs to the MT-A70-like family.

Functionally, probable methyltransferase. The sequence is that of Methyltransferase-like protein 2 from Arabidopsis thaliana (Mouse-ear cress).